Here is a 583-residue protein sequence, read N- to C-terminus: 2-succinyl-5-enolpyruvyl-6-hydroxy-3-cyclohexene-1-carboxylate synthase (583 aa).

This sequence belongs to the TPP enzyme family. MenD subfamily. In terms of assembly, homodimer. The cofactor is Mg(2+). Mn(2+) is required as a cofactor. It depends on thiamine diphosphate as a cofactor.

It carries out the reaction isochorismate + 2-oxoglutarate + H(+) = 5-enolpyruvoyl-6-hydroxy-2-succinyl-cyclohex-3-ene-1-carboxylate + CO2. It functions in the pathway quinol/quinone metabolism; 1,4-dihydroxy-2-naphthoate biosynthesis; 1,4-dihydroxy-2-naphthoate from chorismate: step 2/7. Its pathway is quinol/quinone metabolism; menaquinone biosynthesis. Catalyzes the thiamine diphosphate-dependent decarboxylation of 2-oxoglutarate and the subsequent addition of the resulting succinic semialdehyde-thiamine pyrophosphate anion to isochorismate to yield 2-succinyl-5-enolpyruvyl-6-hydroxy-3-cyclohexene-1-carboxylate (SEPHCHC). The sequence is that of 2-succinyl-5-enolpyruvyl-6-hydroxy-3-cyclohexene-1-carboxylate synthase from Chlorobium chlorochromatii (strain CaD3).